We begin with the raw amino-acid sequence, 122 residues long: Large ribosomal subunit protein uL14 (122 aa).

It belongs to the universal ribosomal protein uL14 family. As to quaternary structure, part of the 50S ribosomal subunit. Forms a cluster with proteins L3 and L19. In the 70S ribosome, L14 and L19 interact and together make contacts with the 16S rRNA in bridges B5 and B8.

Functionally, binds to 23S rRNA. Forms part of two intersubunit bridges in the 70S ribosome. The polypeptide is Large ribosomal subunit protein uL14 (Rickettsia africae (strain ESF-5)).